The following is a 52-amino-acid chain: uncharacterized protein (52 aa).

The segment at 1-52 (MVNNDAKIGRREFYDRVESVRPKSPPRERPTYTYSNSRTVDGYSNRGPRADF) is disordered. Basic and acidic residues predominate over residues 7–30 (KIGRREFYDRVESVRPKSPPRERP).

This is an uncharacterized protein from Dictyostelium discoideum (Social amoeba).